A 500-amino-acid polypeptide reads, in one-letter code: Glycerol kinase (500 aa).

T13 contacts ADP. ATP contacts are provided by T13, T14, and S15. A sn-glycerol 3-phosphate-binding site is contributed by T13. R17 contacts ADP. R83, E84, Y135, and D244 together coordinate sn-glycerol 3-phosphate. Residues R83, E84, Y135, D244, and Q245 each contribute to the glycerol site. ADP-binding residues include T266 and G309. Positions 266, 309, 313, and 410 each coordinate ATP. 2 residues coordinate ADP: G410 and N414.

This sequence belongs to the FGGY kinase family.

The enzyme catalyses glycerol + ATP = sn-glycerol 3-phosphate + ADP + H(+). Its pathway is polyol metabolism; glycerol degradation via glycerol kinase pathway; sn-glycerol 3-phosphate from glycerol: step 1/1. With respect to regulation, inhibited by fructose 1,6-bisphosphate (FBP). In terms of biological role, key enzyme in the regulation of glycerol uptake and metabolism. Catalyzes the phosphorylation of glycerol to yield sn-glycerol 3-phosphate. This chain is Glycerol kinase, found in Burkholderia multivorans (strain ATCC 17616 / 249).